An 86-amino-acid polypeptide reads, in one-letter code: Small ribosomal subunit protein bS18 (86 aa).

It belongs to the bacterial ribosomal protein bS18 family. In terms of assembly, part of the 30S ribosomal subunit. Forms a tight heterodimer with protein bS6.

In terms of biological role, binds as a heterodimer with protein bS6 to the central domain of the 16S rRNA, where it helps stabilize the platform of the 30S subunit. The protein is Small ribosomal subunit protein bS18 of Maridesulfovibrio salexigens (strain ATCC 14822 / DSM 2638 / NCIMB 8403 / VKM B-1763) (Desulfovibrio salexigens).